A 338-amino-acid chain; its full sequence is MASAGGCKKKTGNSRSRSPRSPVVLRRAMLHSSLCFLVGLLAGLAAPSDWPAAAGAAVFLRTLRASNVIFSRSSNRPQQPQLVVVVTTTEQSDDSERRAAGLTRTAHALRLVSPPLLWLVVEEAPAEKHAAPPTARLLRRTGVVHRHLLMKQGDDDFSMQISMRREQQRNVALRHIEDHRIAGVVLFGGLADIYDLRLLHHLRDIRTFGAWPVATVSAYERKVMVQGPLCINTSSSSVITRGWFDMDMDMAAGGERRAAADRPPPETLMEVGGFAFSSWMLWDPHRWDRFPLSDPDASQESVKFVQRVAVEEYNQSTTRGMPDSDCSQIMLWRIQTTL.

The tract at residues 1–21 is disordered; the sequence is MASAGGCKKKTGNSRSRSPRS. The Cytoplasmic portion of the chain corresponds to 1–27; sequence MASAGGCKKKTGNSRSRSPRSPVVLRR. A helical; Signal-anchor for type II membrane protein membrane pass occupies residues 28–46; the sequence is AMLHSSLCFLVGLLAGLAA. Topologically, residues 47–338 are lumenal; the sequence is PSDWPAAAGA…IMLWRIQTTL (292 aa). Asparagine 232 and asparagine 314 each carry an N-linked (GlcNAc...) asparagine glycan.

It belongs to the glycosyltransferase 43 family.

Its subcellular location is the golgi apparatus membrane. Probable beta-1,4-xylosyltransferase involved in xylan biosynthesis in cell walls. The sequence is that of Probable beta-1,4-xylosyltransferase IRX9 from Oryza sativa subsp. japonica (Rice).